The sequence spans 292 residues: MATPNGPRVPCPQAAVARALLFGLVLIQGAGVAGTTDVVVAYNITWKSTNFKTILEWEPKPINHVYTVQISPRLGNWKNKCFYTTNTECDVTDEIVKNVRETYLARVLSYPADTSSSTVEPPFTNSPEFTPYLETNLGQPTIQSFEQVGTKLNVTVQDARTLVRANSAFLSLRDVFGKDLNYTLYYWKASSTGKKKATTNTNGFLIDVDKGENYCFHVQAVILSRRVNQKSPESPIKCTSHEKVLSTELFFIIGTVMLVIIIFIVVLSVSLHKCRKVRAERSGKENTPLNAA.

The first 35 residues, 1–35, serve as a signal peptide directing secretion; it reads MATPNGPRVPCPQAAVARALLFGLVLIQGAGVAGT. The Extracellular portion of the chain corresponds to 36 to 248; sequence TDVVVAYNIT…TSHEKVLSTE (213 aa). A glycan (N-linked (GlcNAc...) asparagine) is linked at Asn43. The WKS motif signature appears at 46-48; it reads WKS. An intrachain disulfide couples Cys81 to Cys89. Residues Asn153 and Asn181 are each glycosylated (N-linked (GlcNAc...) asparagine). A disulfide bridge links Cys215 with Cys238. Residues 249–271 traverse the membrane as a helical segment; the sequence is LFFIIGTVMLVIIIFIVVLSVSL. Topologically, residues 272–292 are cytoplasmic; it reads HKCRKVRAERSGKENTPLNAA. A lipid anchor (S-palmitoyl cysteine) is attached at Cys274.

Belongs to the tissue factor family. As to quaternary structure, interacts with HSPE; the interaction, inhibited by heparin, promotes the generation of activated factor X and activates coagulation in the presence of activated factor VII.

The protein localises to the membrane. Functionally, initiates blood coagulation by forming a complex with circulating factor VII or VIIa. The [TF:VIIa] complex activates factors IX or X by specific limited proteolysis. TF plays a role in normal hemostasis by initiating the cell-surface assembly and propagation of the coagulation protease cascade. The chain is Tissue factor (F3) from Bos taurus (Bovine).